The primary structure comprises 205 residues: Large ribosomal subunit protein uL4 (205 aa).

The interval 45 to 97 (RQGTSAVKNRSAVRGGGKKPWRQKGTGRARQGSIRAPQWRGGGTVFGPTPRSY) is disordered. Residues 60 to 71 (GGKKPWRQKGTG) are compositionally biased toward basic residues.

It belongs to the universal ribosomal protein uL4 family. Part of the 50S ribosomal subunit.

Its function is as follows. One of the primary rRNA binding proteins, this protein initially binds near the 5'-end of the 23S rRNA. It is important during the early stages of 50S assembly. It makes multiple contacts with different domains of the 23S rRNA in the assembled 50S subunit and ribosome. Functionally, forms part of the polypeptide exit tunnel. The polypeptide is Large ribosomal subunit protein uL4 (Lactobacillus johnsonii (strain CNCM I-12250 / La1 / NCC 533)).